Here is a 71-residue protein sequence, read N- to C-terminus: Beta-defensin 124 (71 aa).

A signal peptide spans 1–22; it reads MTQLLLFLVALLVLGHVPSGRS. 3 disulfide bridges follow: Cys-27-Cys-54, Cys-34-Cys-48, and Cys-38-Cys-55.

Belongs to the beta-defensin family.

Its subcellular location is the secreted. In terms of biological role, has antibacterial activity. The protein is Beta-defensin 124 (DEFB124) of Pan troglodytes (Chimpanzee).